The sequence spans 95 residues: Cystatin-A2 (95 aa).

The Secondary area of contact motif lies at 47–51 (QLVNG).

It belongs to the cystatin family.

The protein resides in the cytoplasm. Intracellular thiol proteinase inhibitor. Inhibits cathepsin B, but not papain. In Dictyostelium discoideum (Social amoeba), this protein is Cystatin-A2 (cpiB).